A 513-amino-acid chain; its full sequence is GMP synthase [glutamine-hydrolyzing] (513 aa).

Positions 3–200 (SVLVLDFGSQ…LLNIAGITPD (198 aa)) constitute a Glutamine amidotransferase type-1 domain. Cys80 (nucleophile) is an active-site residue. Catalysis depends on residues His174 and Glu176. The GMPS ATP-PPase domain occupies 201–388 (WSSKSFIDHQ…LGIAEDILMR (188 aa)). Position 228-234 (228-234 (SGGVDST)) interacts with ATP.

Homodimer.

It catalyses the reaction XMP + L-glutamine + ATP + H2O = GMP + L-glutamate + AMP + diphosphate + 2 H(+). Its pathway is purine metabolism; GMP biosynthesis; GMP from XMP (L-Gln route): step 1/1. Its function is as follows. Catalyzes the synthesis of GMP from XMP. The sequence is that of GMP synthase [glutamine-hydrolyzing] from Chlorobium phaeovibrioides (strain DSM 265 / 1930) (Prosthecochloris vibrioformis (strain DSM 265)).